The chain runs to 90 residues: DNA-directed RNA polymerase subunit omega (90 aa).

Positions 69-90 (RQEQQEQDAAELAAVSSITHNR) are disordered.

Belongs to the RNA polymerase subunit omega family. As to quaternary structure, the RNAP catalytic core consists of 2 alpha, 1 beta, 1 beta' and 1 omega subunit. When a sigma factor is associated with the core the holoenzyme is formed, which can initiate transcription.

The enzyme catalyses RNA(n) + a ribonucleoside 5'-triphosphate = RNA(n+1) + diphosphate. In terms of biological role, promotes RNA polymerase assembly. Latches the N- and C-terminal regions of the beta' subunit thereby facilitating its interaction with the beta and alpha subunits. This is DNA-directed RNA polymerase subunit omega from Aliivibrio salmonicida (strain LFI1238) (Vibrio salmonicida (strain LFI1238)).